The primary structure comprises 403 residues: F-box/kelch-repeat protein At5g39560 (403 aa).

In terms of domain architecture, F-box spans 26–72; it reads PPSLMSLPYEIIENILARISKWSYPNLSLVSKSFLSLLSSPQLYKTR. Kelch repeat units follow at residues 138 to 182, 184 to 229, 248 to 294, and 296 to 340; these read EIYV…LIDQ, IYVL…VWPN, NPNA…IENV, and YACH…VNYG.

The protein is F-box/kelch-repeat protein At5g39560 of Arabidopsis thaliana (Mouse-ear cress).